The following is a 331-amino-acid chain: 6-phosphogluconolactonase (331 aa).

This sequence belongs to the cycloisomerase 2 family.

It carries out the reaction 6-phospho-D-glucono-1,5-lactone + H2O = 6-phospho-D-gluconate + H(+). The protein operates within carbohydrate degradation; pentose phosphate pathway; D-ribulose 5-phosphate from D-glucose 6-phosphate (oxidative stage): step 2/3. Catalyzes the hydrolysis of 6-phosphogluconolactone to 6-phosphogluconate. The sequence is that of 6-phosphogluconolactonase from Klebsiella pneumoniae (strain 342).